A 525-amino-acid chain; its full sequence is Beta-1,4-xylosyltransferase IRX14 (525 aa).

Topologically, residues 1–35 (MKLSALHQSYLNRRSNSFRSPTSLDSSVDGSGKSL) are cytoplasmic. A helical; Signal-anchor for type II membrane protein membrane pass occupies residues 36–56 (IAVFWLILHCLCCLISLVLGF). At 57-525 (RFSRLVFFFL…SSSSKHQERN (469 aa)) the chain is on the lumenal side. 3 N-linked (GlcNAc...) asparagine glycosylation sites follow: asparagine 102, asparagine 204, and asparagine 326. Positions 452–525 (RTPWPDVPPE…SSSSKHQERN (74 aa)) are disordered. Polar residues predominate over residues 471-488 (PLSQGNTVVVIPKQQQHP). The segment covering 489-503 (TKIRKPKRKSKKSKH) has biased composition (basic residues). A compositionally biased stretch (polar residues) spans 508 to 519 (TDTTTQVYSSSS).

The protein belongs to the glycosyltransferase 43 family. In terms of tissue distribution, expressed in developing interfascicular fibers and xylem cells in stems and developing secondary xylem in roots.

It is found in the golgi apparatus membrane. The catalysed reaction is [(1-&gt;4)-beta-D-xylan](n) + UDP-alpha-D-xylose = [(1-&gt;4)-beta-D-xylan](n+1) + UDP + H(+). Functionally, involved in the synthesis of the hemicellulose glucuronoxylan, a major component of secondary cell walls. Involved in the elongation of glucuronoxylan xylosyl backbone. Xylan xylosyltransferase that acts cooperatively with IRX9 to achieve the successive addition of xylosyl residues during xylan backbone elongation. Required for the proper composition and structural properties of released seed coat mucilage. Required for the production of highly branched xylan polymers in seed coat mucilage. Xylan with xylose side chains seems to be necessary for pectin attachment to the seed surface. Together with MUCI70, required for xylan and pectin synthesis in seed coat epidermal (SCE) cells. This Arabidopsis thaliana (Mouse-ear cress) protein is Beta-1,4-xylosyltransferase IRX14.